Here is a 464-residue protein sequence, read N- to C-terminus: MAVYNYDVVVLGSGPAGEGAAMNAAKAGRKVAMVDSRRQVGGNCTHLGTIPSKALRHSVKQIIQFNTNPMFRAIGEPRWFSFPDVLKNAEMVISKQVASRTSYYARNRVDVFFGTGSFADETSINVVCTNGVVEKLVANQIIIATGSRPYRPADIDFSHKRIYDSDTILSLGHTPRKLIIYGAGVIGCEYASIFSGLGVLVELVDNRDQLLSFLDSEISQALSYHFSNNNVMVRHNEEYEKVEGLDNGVILHLKSGKKIKADALLWCNGRTGNTDKLGLENIGLKANGRGQIEVDETYRTSVSNVYGAGDVIGWPSLASAAYDQGRSAAGSMVDNGSWRYVNDVPTGIYTIPEISSIGKNEHELTQAKVPYEVGKAFFKGMARAQISGERVGMLKILFHRETLEVLGVHCFGDQASEIVHIGQAIMSQPGEANTMKYFVNTTFNYPTMAEAYRVAAYDGLNRLF.

Residue 35–44 participates in FAD binding; the sequence is DSRRQVGGNC.

Belongs to the class-I pyridine nucleotide-disulfide oxidoreductase family. FAD is required as a cofactor.

It localises to the cytoplasm. The catalysed reaction is NAD(+) + NADPH = NADH + NADP(+). Conversion of NADPH, generated by peripheral catabolic pathways, to NADH, which can enter the respiratory chain for energy generation. In Pseudomonas syringae pv. syringae (strain B728a), this protein is Soluble pyridine nucleotide transhydrogenase.